Consider the following 306-residue polypeptide: Pantothenate kinase (306 aa).

91-98 contributes to the ATP binding site; the sequence is GSVAVGKS.

This sequence belongs to the prokaryotic pantothenate kinase family.

It localises to the cytoplasm. It carries out the reaction (R)-pantothenate + ATP = (R)-4'-phosphopantothenate + ADP + H(+). It participates in cofactor biosynthesis; coenzyme A biosynthesis; CoA from (R)-pantothenate: step 1/5. The sequence is that of Pantothenate kinase from Streptococcus pyogenes serotype M12 (strain MGAS2096).